The sequence spans 511 residues: Aldehyde dehydrogenase 2, mitochondrial (511 aa).

The transit peptide at 1-21 (MSKSKTKTDKRNQSSLSRIKL) directs the protein to the mitochondrion. The disordered stretch occupies residues 72-92 (VSEKSQHDSTEEDITQVSEKS). 274–279 (GSTLVG) is an NAD(+) binding site. Glu297 serves as the catalytic Proton acceptor. Cys331 acts as the Nucleophile in catalysis.

Belongs to the aldehyde dehydrogenase family.

It is found in the mitochondrion matrix. It carries out the reaction an aldehyde + NAD(+) + H2O = a carboxylate + NADH + 2 H(+). The protein operates within alcohol metabolism; ethanol degradation; acetate from ethanol: step 2/2. The chain is Aldehyde dehydrogenase 2, mitochondrial (ALD2) from Saccharomyces cerevisiae (Baker's yeast).